A 119-amino-acid chain; its full sequence is MIPGEIQVADGDLLLNEGRATLQVAVANTGDRPIQIGSHYHFFETNPALQFDRAATRGFRLDIPAGTAVRFEPGQTRTVTLVAYAGRRHVYGFRGDVMGPLDEIAQSDQGAQHEQGAQA.

The protein belongs to the urease beta subunit family. As to quaternary structure, heterotrimer of UreA (gamma), UreB (beta) and UreC (alpha) subunits. Three heterotrimers associate to form the active enzyme.

Its subcellular location is the cytoplasm. It catalyses the reaction urea + 2 H2O + H(+) = hydrogencarbonate + 2 NH4(+). It participates in nitrogen metabolism; urea degradation; CO(2) and NH(3) from urea (urease route): step 1/1. In Tolumonas auensis (strain DSM 9187 / NBRC 110442 / TA 4), this protein is Urease subunit beta.